A 65-amino-acid polypeptide reads, in one-letter code: Adrenergic toxin rho-elapitoxin-Dp1b (65 aa).

4 disulfides stabilise this stretch: Cys3/Cys24, Cys17/Cys42, Cys46/Cys57, and Cys58/Cys63.

This sequence belongs to the three-finger toxin family. Short-chain subfamily. Aminergic toxin sub-subfamily. Expressed by the venom gland.

It localises to the secreted. Functionally, highly potent on various alpha-adrenoceptors (ADRA) (subnanomolar affinity for ADRA1A). Order of potency is the following: ADRA1A (Ki=0.37 nM) &gt; ADRA1B (Ki=10.47 nM) &gt; ADRA1D (Ki=104.71 nM) &gt; ADRA2C (Ki=165.96 nM). Were also found to reversibly bind to muscarinic acetylcholine receptors (CHRM), but the affinity is much weaker (CHRM1, Ki=1778.28 nM; CHRM4, Ki=4466.84 nM; CHRM2, Ki=17782.79 nM). This is Adrenergic toxin rho-elapitoxin-Dp1b from Dendroaspis polylepis polylepis (Black mamba).